The following is a 591-amino-acid chain: Trihelix transcription factor PTL (591 aa).

Residues 1-32 (MDQDQHPQYGIPELRQLMKGGGRTTTTTPSTS) form a disordered region. The 60-residue stretch at 118 to 177 (GRWPRQETLTLLEIRSRLDHKFKEANQKGPLWDEVSRIMSEEHGYQRSGKKCREKFENLY) folds into the Myb-like 1 domain. A disordered region spans residues 380–410 (CSSPEERTNGNNEIRNNSETQNENGSDQTMT). Residues 388-410 (NGNNEIRNNSETQNENGSDQTMT) show a composition bias toward polar residues. A Myb-like 2 domain is found at 422-479 (WGEQEILKLMEIRTSMDSTFQEILGGCSDEFLWEEIAAKLIQLGFDQRSALLCKEKWE). Residues 491–551 (QINKKRKDNS…SNANANANVT (61 aa)) are disordered. The segment covering 515 to 534 (IYNNRESGYNDNDPHQINEQ) has biased composition (polar residues). Residues 535–551 (GNVGSSTSNANANANVT) are compositionally biased toward low complexity.

As to quaternary structure, interacts with KIN10. Confined to flowers, at low levels. Also present in 7-days-old seedlings. Barely detectable in other tissues such as young seedlings, roots, stems, leaves and siliques. Expressed in flower primordia, more precisely between newly arisen sepal primordia and also at the basal margins of developing sepals.

Its subcellular location is the nucleus. Functionally, transcription factor that prevents growth. Regulates perianth architecture in flower, mostly in the second whorl, probably by suppressing growth between initiating sepals, ensuring that they remain separate, and by modulating organ shapes. Required for the establishment of auxin flux. This Arabidopsis thaliana (Mouse-ear cress) protein is Trihelix transcription factor PTL (PTL).